The following is a 155-amino-acid chain: Ribosome maturation factor RimP (155 aa).

Belongs to the RimP family.

The protein resides in the cytoplasm. Its function is as follows. Required for maturation of 30S ribosomal subunits. The protein is Ribosome maturation factor RimP of Agathobacter rectalis (strain ATCC 33656 / DSM 3377 / JCM 17463 / KCTC 5835 / VPI 0990) (Eubacterium rectale).